The primary structure comprises 332 residues: tRNA-dihydrouridine(20/20a) synthase (332 aa).

Residues 19 to 21 (PML) and Gln71 contribute to the FMN site. The Proton donor role is filled by Cys101. Residues Lys140, His173, 213–215 (NGG), and 235–236 (GR) contribute to the FMN site.

The protein belongs to the Dus family. DusA subfamily. Requires FMN as cofactor.

It carries out the reaction 5,6-dihydrouridine(20) in tRNA + NADP(+) = uridine(20) in tRNA + NADPH + H(+). It catalyses the reaction 5,6-dihydrouridine(20) in tRNA + NAD(+) = uridine(20) in tRNA + NADH + H(+). The catalysed reaction is 5,6-dihydrouridine(20a) in tRNA + NADP(+) = uridine(20a) in tRNA + NADPH + H(+). The enzyme catalyses 5,6-dihydrouridine(20a) in tRNA + NAD(+) = uridine(20a) in tRNA + NADH + H(+). Its function is as follows. Catalyzes the synthesis of 5,6-dihydrouridine (D), a modified base found in the D-loop of most tRNAs, via the reduction of the C5-C6 double bond in target uridines. Specifically modifies U20 and U20a in tRNAs. This is tRNA-dihydrouridine(20/20a) synthase from Salmonella typhimurium (strain LT2 / SGSC1412 / ATCC 700720).